Reading from the N-terminus, the 771-residue chain is Glucocorticoid receptor (771 aa).

The interval Met-1–Leu-415 is modulating. The residue at position 8 (Thr-8) is a Phosphothreonine. An Omega-N-methylarginine modification is found at Arg-22. Phosphoserine is present on residues Ser-44, Ser-133, Ser-199, Ser-207, and Ser-222. A compositionally biased stretch (polar residues) spans Ser-129–Gly-172. The disordered stretch occupies residues Ser-129–Gln-184. A Glycyl lysine isopeptide (Lys-Gly) (interchain with G-Cter in SUMO2) cross-link involves residue Lys-254. A Phosphoserine modification is found at Ser-263. Glycyl lysine isopeptide (Lys-Gly) (interchain with G-Cter in SUMO); alternate cross-links involve residues Lys-273 and Lys-289. Residues Lys-273 and Lys-289 each participate in a glycyl lysine isopeptide (Lys-Gly) (interchain with G-Cter in SUMO2); alternate cross-link. Phosphoserine is present on residues Ser-303 and Ser-400. The interval Ser-390–Pro-411 is disordered. A compositionally biased stretch (low complexity) spans Ser-400–Thr-409. A Glycyl lysine isopeptide (Lys-Gly) (interchain with G-Cter in ubiquitin) cross-link involves residue Lys-414. NR C4-type zinc fingers lie at residues Cys-416–Cys-436 and Cys-452–Cys-476. The segment at residues Cys-416–Met-481 is a DNA-binding region (nuclear receptor). 4 positions are modified to N6-acetyllysine: Lys-475, Lys-487, Lys-489, and Lys-490. Positions Gly-480 to Lys-771 are interaction with CLOCK. The tract at residues Asn-482–Ala-517 is hinge. In terms of domain architecture, NR LBD spans Thr-518–Thr-752. Residues Leu-526–Leu-691 form an interaction with CRY1 region. Residue Lys-697 forms a Glycyl lysine isopeptide (Lys-Gly) (interchain with G-Cter in SUMO) linkage.

The protein belongs to the nuclear hormone receptor family. NR3 subfamily. As to quaternary structure, heteromultimeric cytoplasmic complex with HSP90AA1, HSPA1A/HSPA1B, and FKBP5 or another immunophilin such as PPID, STIP1, or the immunophilin homolog PPP5C. Upon ligand binding FKBP5 dissociates from the complex and FKBP4 takes its place, thereby linking the complex to dynein and mediating transport to the nucleus, where the complex dissociates. Probably forms a complex composed of chaperones HSP90 and HSP70, co-chaperones CDC37, PPP5C, TSC1 and client protein TSC2, CDK4, AKT, RAF1 and NR3C1; this complex does not contain co-chaperones STIP1/HOP and PTGES3/p23. Directly interacts with UNC45A. Binds to DNA as a homodimer, and as heterodimer with NR3C2 or the retinoid X receptor. Binds STAT5A and STAT5B homodimers and heterodimers. Interacts with NRIP1, POU2F1, POU2F2 and TRIM28. Interacts with several coactivator complexes, including the SMARCA4 complex, CREBBP/EP300, TADA2L (Ada complex) and p160 coactivators such as NCOA2 and NCOA6. Interaction with BAG1 inhibits transactivation. Interacts with HEXIM1 and TGFB1I1. Interacts with NCOA1. Interacts with NCOA3, SMARCA4, SMARCC1, SMARCD1, and SMARCE1. Interacts with CLOCK, CRY1 and CRY2 in a ligand-dependent fashion. Interacts with CIART. Interacts with RWDD3. Interacts with UBE2I/UBC9 and this interaction is enhanced in the presence of RWDD3. Interacts with GRIP1. Interacts with NR4A3 (via nuclear receptor DNA-binding domain), represses transcription activity of NR4A3 on the POMC promoter Nur response element (NurRE). Directly interacts with PNRC2 to attract and form a complex with UPF1 and DCP1A; the interaction leads to rapid mRNA degradation. Interacts with GSK3B. Interacts with FNIP1 and FNIP2. Interacts (via C-terminus) with HNRNPU (via C-terminus). Interacts with MCM3AP. Interacts (via domain NR LBD) with HSP90AA1 and HSP90AB1. In the absence of hormonal ligand, interacts with TACC1. Interacts (via NR LBD domain) with ZNF764 (via KRAB domain); the interaction regulates transcription factor activity of NR3C1 by directing its actions toward certain biologic pathways. In terms of processing, acetylation by CLOCK reduces its binding to glucocorticoid response elements and its transcriptional activity. Increased proteasome-mediated degradation in response to glucocorticoids. Post-translationally, phosphorylated in the absence of hormone; becomes hyperphosphorylated in the presence of glucocorticoid. The Ser-199, Ser-222 and Ser-400-phosphorylated forms are mainly cytoplasmic, and the Ser-207-phosphorylated form is nuclear. Phosphorylation at Ser-207 increases transcriptional activity. Phosphorylation at Ser-199, Ser-222 and Ser-400 decreases signaling capacity. Phosphorylation at Ser-400 may protect from glucocorticoid-induced apoptosis. Phosphorylation at Ser-199 and Ser-207 is not required in regulation of chromosome segregation. May be dephosphorylated by PPP5C, attenuates NR3C1 action. In terms of processing, ubiquitinated by UBR5, leading to its degradation: UBR5 specifically recognizes and binds ligand-bound NR3C1 when it is not associated with coactivators (NCOAs). In presence of NCOAs, the UBR5-degron is not accessible, preventing its ubiquitination and degradation. Sumoylation at Lys-273 and Lys-289 negatively regulates its transcriptional activity. Sumoylation at Lys-697 positively regulates its transcriptional activity in the presence of RWDD3. Sumoylation at Lys-273 and Lys-289 is dispensable whereas sumoylation at Lys-697 is critical for the stimulatory effect of RWDD3 on its transcriptional activity. Heat shock increases sumoylation in a RWDD3-dependent manner.

It localises to the cytoplasm. The protein resides in the nucleus. It is found in the mitochondrion. Its subcellular location is the cytoskeleton. The protein localises to the spindle. It localises to the microtubule organizing center. The protein resides in the centrosome. It is found in the chromosome. Its subcellular location is the nucleoplasm. Functionally, receptor for glucocorticoids (GC). Has a dual mode of action: as a transcription factor that binds to glucocorticoid response elements (GRE), both for nuclear and mitochondrial DNA, and as a modulator of other transcription factors. Affects inflammatory responses, cellular proliferation and differentiation in target tissues. Involved in chromatin remodeling. Plays a role in rapid mRNA degradation by binding to the 5' UTR of target mRNAs and interacting with PNRC2 in a ligand-dependent manner which recruits the RNA helicase UPF1 and the mRNA-decapping enzyme DCP1A, leading to RNA decay. Could act as a coactivator for STAT5-dependent transcription upon growth hormone (GH) stimulation and could reveal an essential role of hepatic GR in the control of body growth. Mediates glucocorticoid-induced apoptosis. Promotes accurate chromosome segregation during mitosis. May act as a tumor suppressor. May play a negative role in adipogenesis through the regulation of lipolytic and antilipogenic gene expression. This is Glucocorticoid receptor (NR3C1) from Cavia porcellus (Guinea pig).